The sequence spans 130 residues: Large ribosomal subunit protein bL31c (130 aa).

A chloroplast-targeting transit peptide spans 1 to 36; it reads MVLTLSNQFLAKIPATPKTLTLPKTSSSTLRPQWSC.

The protein belongs to the bacterial ribosomal protein bL31 family. Type A subfamily. Component of the chloroplast large ribosomal subunit (LSU). Mature 70S chloroplast ribosomes of higher plants consist of a small (30S) and a large (50S) subunit. The 30S small subunit contains 1 molecule of ribosomal RNA (16S rRNA) and 24 different proteins. The 50S large subunit contains 3 rRNA molecules (23S, 5S and 4.5S rRNA) and 33 different proteins.

Its subcellular location is the plastid. The protein localises to the chloroplast. Functionally, component of the chloroplast ribosome (chloro-ribosome), a dedicated translation machinery responsible for the synthesis of chloroplast genome-encoded proteins, including proteins of the transcription and translation machinery and components of the photosynthetic apparatus. This chain is Large ribosomal subunit protein bL31c (RPL31), found in Spinacia oleracea (Spinach).